Consider the following 382-residue polypeptide: uncharacterized protein (382 aa).

12 consecutive transmembrane segments (helical) span residues 14-34 (GLLLLTLAIAVLNTLVPLWLA), 45-65 (VVSSSYFTGNLVGTLLTGYVI), 79-99 (FIFAAGCAGLGLMIGFWSWLA), 102-122 (FVAGIGCAMIWVVVESALMCS), 131-151 (LLAAYMMVYYVGTFLGQLLVS), 157-177 (LMSVLPWVTGLTLAGILPLLF), 204-224 (LGVNGCIISGIVLGSLYGLMP), 235-255 (ASIGFWMAVLVSAGILGQWPI), 270-290 (VQVFVVILGSIAMLSQAAMAP), 291-311 (ALFILGAAGFTLYPVAMAWAC), 325-345 (ALLLSYTVGSLLGPSFTAMLM), and 348-368 (FSDNLLFIMIASVSFIYLLML).

Belongs to the major facilitator superfamily. YcaD (TC 2.A.1.26) family.

It is found in the cell inner membrane. This is an uncharacterized protein from Escherichia coli O45:K1 (strain S88 / ExPEC).